Reading from the N-terminus, the 28-residue chain is Cytochrome b6-f complex subunit 6 (28 aa).

The chain crosses the membrane as a helical span at residues 2-22 (VEYLVILSGMFGLALACFFGL).

This sequence belongs to the PetL family. The 4 large subunits of the cytochrome b6-f complex are cytochrome b6, subunit IV (17 kDa polypeptide, PetD), cytochrome f and the Rieske protein, while the 4 small subunits are PetG, PetL, PetM and PetN. The complex functions as a dimer.

The protein resides in the plastid. The protein localises to the cyanelle thylakoid membrane. In terms of biological role, component of the cytochrome b6-f complex, which mediates electron transfer between photosystem II (PSII) and photosystem I (PSI), cyclic electron flow around PSI, and state transitions. PetL is important for photoautotrophic growth as well as for electron transfer efficiency and stability of the cytochrome b6-f complex. This chain is Cytochrome b6-f complex subunit 6, found in Cyanophora paradoxa.